Here is a 310-residue protein sequence, read N- to C-terminus: tRNA-cytidine(32) 2-sulfurtransferase (310 aa).

Positions 45-50 (SGGKDS) match the PP-loop motif motif. [4Fe-4S] cluster-binding residues include Cys-120, Cys-123, and Cys-211.

It belongs to the TtcA family. As to quaternary structure, homodimer. It depends on Mg(2+) as a cofactor. [4Fe-4S] cluster serves as cofactor.

The protein resides in the cytoplasm. It catalyses the reaction cytidine(32) in tRNA + S-sulfanyl-L-cysteinyl-[cysteine desulfurase] + AH2 + ATP = 2-thiocytidine(32) in tRNA + L-cysteinyl-[cysteine desulfurase] + A + AMP + diphosphate + H(+). It participates in tRNA modification. Functionally, catalyzes the ATP-dependent 2-thiolation of cytidine in position 32 of tRNA, to form 2-thiocytidine (s(2)C32). The sulfur atoms are provided by the cysteine/cysteine desulfurase (IscS) system. The protein is tRNA-cytidine(32) 2-sulfurtransferase of Shewanella sp. (strain ANA-3).